The sequence spans 432 residues: Adenylosuccinate synthetase (432 aa).

GTP-binding positions include 13–19 and 41–43; these read GDEGKGK and GHT. The Proton acceptor role is filled by aspartate 14. The Mg(2+) site is built by aspartate 14 and glycine 41. IMP contacts are provided by residues 14–17, 39–42, threonine 130, arginine 144, glutamine 225, threonine 240, and arginine 304; these read DEGK and NAGH. The Proton donor role is filled by histidine 42. Substrate is bound at residue 300-306; it reads ATTGRRR. GTP contacts are provided by residues arginine 306, 332-334, and 415-417; these read KLD and STG.

The protein belongs to the adenylosuccinate synthetase family. As to quaternary structure, homodimer. The cofactor is Mg(2+).

It is found in the cytoplasm. It catalyses the reaction IMP + L-aspartate + GTP = N(6)-(1,2-dicarboxyethyl)-AMP + GDP + phosphate + 2 H(+). It functions in the pathway purine metabolism; AMP biosynthesis via de novo pathway; AMP from IMP: step 1/2. Functionally, plays an important role in the de novo pathway of purine nucleotide biosynthesis. Catalyzes the first committed step in the biosynthesis of AMP from IMP. The chain is Adenylosuccinate synthetase from Shigella sonnei (strain Ss046).